Here is a 622-residue protein sequence, read N- to C-terminus: Probable potassium transport system protein Kup (622 aa).

12 consecutive transmembrane segments (helical) span residues 7–27 (LAIG…LYAF), 44–64 (VLGV…IQYV), 95–115 (GWLV…DSMI), 133–153 (PELQ…LFVL), 165–185 (FAPV…ISIV), 199–219 (AVLF…SVVL), 243–263 (WFGF…AMIV), 290–310 (LVIL…SGAF), 338–358 (IYIP…VLTF), 370–390 (IAVT…LVGV), 395–415 (WYYA…YFAA), and 422–442 (DGGW…TTWA).

This sequence belongs to the HAK/KUP transporter (TC 2.A.72) family.

It localises to the cell inner membrane. The enzyme catalyses K(+)(in) + H(+)(in) = K(+)(out) + H(+)(out). In terms of biological role, transport of potassium into the cell. Likely operates as a K(+):H(+) symporter. The chain is Probable potassium transport system protein Kup from Erythrobacter litoralis (strain HTCC2594).